Reading from the N-terminus, the 128-residue chain is Glycoprotein hormone alpha-2 (128 aa).

A signal peptide spans 1-20 (MPMAPRVLLLCLLGLAVTEG). Disulfide bonds link Cys-30–Cys-88, Cys-47–Cys-102, Cys-56–Cys-118, and Cys-60–Cys-120. N-linked (GlcNAc...) asparagine glycans are attached at residues Asn-36 and Asn-80.

Belongs to the glycoprotein hormones subunit alpha family. As to quaternary structure, heterodimer with GPHB5; this heterodimer interacts with thyroid-stimulating hormone receptor (TSHR), and hence stimulates cAMP production.

Its subcellular location is the secreted. Functions as a heterodimeric glycoprotein hormone with GPHB5 able to bind and activate the thyroid-stimulating hormone receptor (TSHR), leading to increased cAMP production. Plays a central role in controlling thyroid cell metabolism. In Mus musculus (Mouse), this protein is Glycoprotein hormone alpha-2 (Gpha2).